Here is a 442-residue protein sequence, read N- to C-terminus: UDP-N-acetylmuramate--L-alanine ligase (442 aa).

An ATP-binding site is contributed by 109–115 (GAHGKTS).

This sequence belongs to the MurCDEF family.

Its subcellular location is the cytoplasm. It carries out the reaction UDP-N-acetyl-alpha-D-muramate + L-alanine + ATP = UDP-N-acetyl-alpha-D-muramoyl-L-alanine + ADP + phosphate + H(+). It participates in cell wall biogenesis; peptidoglycan biosynthesis. Its function is as follows. Cell wall formation. This Streptococcus pyogenes serotype M3 (strain SSI-1) protein is UDP-N-acetylmuramate--L-alanine ligase.